The following is a 368-amino-acid chain: Epoxyqueuosine reductase QueH (368 aa).

Positions 6, 7, 87, and 90 each coordinate [4Fe-4S] cluster. Cysteine 174 and cysteine 176 are disulfide-bonded.

This sequence belongs to the QueH family.

It catalyses the reaction epoxyqueuosine(34) in tRNA + AH2 = queuosine(34) in tRNA + A + H2O. It participates in tRNA modification; tRNA-queuosine biosynthesis. In terms of biological role, catalyzes the conversion of epoxyqueuosine (oQ) to queuosine (Q), which is a hypermodified base found in the wobble positions of tRNA(Asp), tRNA(Asn), tRNA(His) and tRNA(Tyr). This is Epoxyqueuosine reductase QueH from Helicobacter pylori (strain ATCC 700392 / 26695) (Campylobacter pylori).